Reading from the N-terminus, the 428-residue chain is Aspartic protease 10 (428 aa).

An N-terminal signal peptide occupies residues 1–16 (MKTFIALLALLTVVSA). Residues 72 to 425 (YMVQISLGSP…DMKSGRLGLA (354 aa)) enclose the Peptidase A1 domain. The active site involves Asp90. Asn155 and Asn191 each carry an N-linked (GlcNAc...) asparagine glycan. The active site involves Asp318. The cysteines at positions 353 and 385 are disulfide-linked.

Belongs to the peptidase A1 family. Proteolytically cleaved. As to expression, synthesized in the intestine. When secreted in low heme conditions, localizes to neurons near the anterior and posterior regions of the body and in coelomocytes.

It is found in the secreted. In terms of biological role, aspartic protease which plays a role in heme homeostasis and mediates inter-organ signaling between the intestine and extra-intestinal tissues when cellular heme levels are low. This is Aspartic protease 10 from Caenorhabditis elegans.